Consider the following 234-residue polypeptide: Cytochrome b (234 aa).

4 consecutive transmembrane segments (helical) span residues 33–53 (FGSL…FLAM), 77–98 (WLIR…YMHV), 113–133 (WNIG…GYVL), and 178–198 (FFAF…IHLL). 2 residues coordinate heme b: H83 and H97. Heme b is bound by residues H182 and H196. H201 serves as a coordination point for a ubiquinone. The chain crosses the membrane as a helical span at residues 226-234 (IKDVLGFLM).

It belongs to the cytochrome b family. The cytochrome bc1 complex contains 11 subunits: 3 respiratory subunits (MT-CYB, CYC1 and UQCRFS1), 2 core proteins (UQCRC1 and UQCRC2) and 6 low-molecular weight proteins (UQCRH/QCR6, UQCRB/QCR7, UQCRQ/QCR8, UQCR10/QCR9, UQCR11/QCR10 and a cleavage product of UQCRFS1). This cytochrome bc1 complex then forms a dimer. Requires heme b as cofactor.

The protein localises to the mitochondrion inner membrane. Component of the ubiquinol-cytochrome c reductase complex (complex III or cytochrome b-c1 complex) that is part of the mitochondrial respiratory chain. The b-c1 complex mediates electron transfer from ubiquinol to cytochrome c. Contributes to the generation of a proton gradient across the mitochondrial membrane that is then used for ATP synthesis. This is Cytochrome b (MT-CYB) from Lepus alleni (Antelope jackrabbit).